Reading from the N-terminus, the 153-residue chain is Bacteriohemerythrin (153 aa).

The Fe cation site is built by H21, H57, E61, H76, H80, H115, and D120.

Belongs to the hemerythrin family. Monomer.

Functionally, oxygen-binding protein. May be involved in a storage mechanism or for delivery to oxygen-requiring enzymes. The oxygen-binding site contains two iron atoms. This chain is Bacteriohemerythrin, found in Pseudomonas aeruginosa (strain UCBPP-PA14).